A 237-amino-acid chain; its full sequence is Arginine-binding periplasmic protein (237 aa).

The first 18 residues, 1–18, serve as a signal peptide directing secretion; the sequence is MKKTLLTLLFGCVVTAQA.

Belongs to the bacterial solute-binding protein 3 family.

It localises to the periplasm. Binds arginine; part of the arginine periplasmic transport system. This Mannheimia haemolytica (Pasteurella haemolytica) protein is Arginine-binding periplasmic protein (lapT).